The primary structure comprises 711 residues: Double-stranded RNA-specific editase 1 (711 aa).

Residues 1-79 (MDIEDEENMS…RRKTPGPVLP (79 aa)) form a disordered region. Over residues 63-73 (SKYRLKKRRKT) the composition is skewed to basic residues. The DRBM 1 domain maps to 78 to 144 (LPKNALMQLN…AEKALRSFVQ (67 aa)). Interaction with substrate RNA regions lie at residues 83-88 (LMQLNE) and 104-105 (VH). Residue Ser-149 is modified to Phosphoserine. Positions 176-220 (LFNGFETPDKSEPPFYVGSNGDDSFSSSGDVSLSASPVPASLTQP) are disordered. A compositionally biased stretch (low complexity) spans 192–213 (VGSNGDDSFSSSGDVSLSASPV). One can recognise a DRBM 2 domain in the interval 231–298 (PSGKNPVMIL…AQSALATVFN (68 aa)). Interaction with substrate RNA stretches follow at residues 237–242 (VMILNE) and His-259. Residues 370–707 (SVSTGTKCIN…VEKPTEQDQF (338 aa)) enclose the A to I editase domain. His-394 is a Zn(2+) binding site. Glu-396 serves as the catalytic Proton donor. 1D-myo-inositol hexakisphosphate contacts are provided by Arg-400 and Arg-401. 2 residues coordinate Zn(2+): Cys-451 and Cys-526. Lys-529, Arg-532, Lys-639, Lys-672, Lys-682, and Lys-700 together coordinate 1D-myo-inositol hexakisphosphate.

Homodimer. Homodimerization is essential for its catalytic activity. Can form heterodimers with isoform 5 of ADAR/ADAR1. 1D-myo-inositol hexakisphosphate serves as cofactor. In terms of tissue distribution, brain and peripheral tissues.

The protein resides in the nucleus. It is found in the nucleolus. It carries out the reaction adenosine in double-stranded RNA + H2O + H(+) = inosine in double-stranded RNA + NH4(+). Functionally, catalyzes the hydrolytic deamination of adenosine to inosine in double-stranded RNA (dsRNA) referred to as A-to-I RNA editing. This may affect gene expression and function in a number of ways that include mRNA translation by changing codons and hence the amino acid sequence of proteins; pre-mRNA splicing by altering splice site recognition sequences; RNA stability by changing sequences involved in nuclease recognition; genetic stability in the case of RNA virus genomes by changing sequences during viral RNA replication; and RNA structure-dependent activities such as microRNA production or targeting or protein-RNA interactions. Can edit both viral and cellular RNAs and can edit RNAs at multiple sites (hyper-editing) or at specific sites (site-specific editing). Its cellular RNA substrates include: bladder cancer-associated protein (BLCAP), neurotransmitter receptors for glutamate (GRIA2 and GRIK2) and serotonin (HTR2C), GABA receptor (GABRA3) and potassium voltage-gated channel (KCNA1). Site-specific RNA editing of transcripts encoding these proteins results in amino acid substitutions which consequently alter their functional activities. Edits GRIA2 at both the Q/R and R/G sites efficiently but converts the adenosine in hotspot1 much less efficiently. Can inhibit cell proliferation and migration and can stimulate exocytosis. The protein is Double-stranded RNA-specific editase 1 (Adarb1) of Rattus norvegicus (Rat).